Here is a 279-residue protein sequence, read N- to C-terminus: uncharacterized protein (279 aa).

The disordered stretch occupies residues 136–279 (TSNATEASEK…FTSDSSDEED (144 aa)). A compositionally biased stretch (low complexity) spans 228–238 (NNGNGAVYSDS).

This is an uncharacterized protein from Invertebrate iridescent virus 3 (IIV-3).